Consider the following 226-residue polypeptide: Probable endolytic peptidoglycan transglycosylase RlpA (226 aa).

Residues 1–26 form the signal peptide; it reads MERFLGFRTPLGALGVVILLTLILSS. Cys27 carries the N-palmitoyl cysteine lipid modification. Cys27 is lipidated: S-diacylglycerol cysteine.

This sequence belongs to the RlpA family.

Its subcellular location is the cell membrane. In terms of biological role, lytic transglycosylase with a strong preference for naked glycan strands that lack stem peptides. In Aquifex aeolicus (strain VF5), this protein is Probable endolytic peptidoglycan transglycosylase RlpA.